Reading from the N-terminus, the 258-residue chain is Retron Ec83 putative HNH endonuclease (258 aa).

Functionally, putative HNH endonuclease component of antiviral defense system retron Ec83, composed of a non-coding RNA (ncRNA), a reverse transcriptase (RT), a probable ATPase and this protein. Expression of retron Ec78 confers protection against bacteriophage T2, T4 and T6. At multiplicity of infection (MOI) of 0.02 cultures slow growth when infected with T4 but do not collapse, at MOI 2 cultures enter growth stasis. The polypeptide is Retron Ec83 putative HNH endonuclease (Escherichia coli).